We begin with the raw amino-acid sequence, 98 residues long: Aspartyl/glutamyl-tRNA(Asn/Gln) amidotransferase subunit C (98 aa).

The protein belongs to the GatC family. As to quaternary structure, heterotrimer of A, B and C subunits.

The catalysed reaction is L-glutamyl-tRNA(Gln) + L-glutamine + ATP + H2O = L-glutaminyl-tRNA(Gln) + L-glutamate + ADP + phosphate + H(+). It carries out the reaction L-aspartyl-tRNA(Asn) + L-glutamine + ATP + H2O = L-asparaginyl-tRNA(Asn) + L-glutamate + ADP + phosphate + 2 H(+). Allows the formation of correctly charged Asn-tRNA(Asn) or Gln-tRNA(Gln) through the transamidation of misacylated Asp-tRNA(Asn) or Glu-tRNA(Gln) in organisms which lack either or both of asparaginyl-tRNA or glutaminyl-tRNA synthetases. The reaction takes place in the presence of glutamine and ATP through an activated phospho-Asp-tRNA(Asn) or phospho-Glu-tRNA(Gln). In Gloeothece citriformis (strain PCC 7424) (Cyanothece sp. (strain PCC 7424)), this protein is Aspartyl/glutamyl-tRNA(Asn/Gln) amidotransferase subunit C.